We begin with the raw amino-acid sequence, 77 residues long: MKEQKWIHEGLITESLPNGMFRVRLDNENMILGYVSGRIRRSFIRILPGDRVKIEVSRYDSTKGRIIYRIRNKDSNN.

The 71-residue stretch at Met1–Arg71 folds into the S1-like domain.

Belongs to the IF-1 family. In terms of assembly, component of the 30S ribosomal translation pre-initiation complex which assembles on the 30S ribosome in the order IF-2 and IF-3, IF-1 and N-formylmethionyl-tRNA(fMet); mRNA recruitment can occur at any time during PIC assembly.

It is found in the plastid. It localises to the chloroplast. Its function is as follows. One of the essential components for the initiation of protein synthesis. Stabilizes the binding of IF-2 and IF-3 on the 30S subunit to which N-formylmethionyl-tRNA(fMet) subsequently binds. Helps modulate mRNA selection, yielding the 30S pre-initiation complex (PIC). Upon addition of the 50S ribosomal subunit IF-1, IF-2 and IF-3 are released leaving the mature 70S translation initiation complex. The chain is Translation initiation factor IF-1, chloroplastic from Vitis vinifera (Grape).